A 107-amino-acid chain; its full sequence is Somatoliberin (107 aa).

The first 19 residues, 1–19, serve as a signal peptide directing secretion; sequence MPLWVFFVILTLTNGSHCS. The propeptide occupies 20 to 30; the sequence is PSPSLPFRIRR. Residue Leu74 is modified to Leucine amide. The propeptide occupies 77–107; sequence QVDSMWADHRQMSLESLLAALLQKHSRDSQG.

The protein belongs to the glucagon family.

It is found in the secreted. Its function is as follows. GRF is released by the hypothalamus and acts on the adenohypophyse to stimulate the secretion of growth hormone. This is Somatoliberin (GHRH) from Mesocricetus auratus (Golden hamster).